We begin with the raw amino-acid sequence, 636 residues long: Polyglycine hydrolase (636 aa).

Positions 1–22 (MHSLSLRRLLTSVLSLCSCSSA) are cleaved as a signal peptide. N-linked (GlcNAc...) asparagine glycans are attached at residues Asn30 and Asn151. Cys141 and Cys175 are oxidised to a cystine. Ser363 is a catalytic residue. N-linked (GlcNAc...) asparagine glycosylation is found at Asn383 and Asn481. A disordered region spans residues 512 to 540 (TEDRIVQESKNTGQDPVHPQSAKLVPGPH).

The protein belongs to the peptidase S12 family.

The protein localises to the secreted. It catalyses the reaction a glycyl-glycyl-[protein] + H2O = N-terminal glycyl-[protein] + [protein]-C-terminal glycine. Serine-type endopeptidase that cleaves Gly-Gly bonds in the polyglycine linker of host plant class IV chitinases to disrupt their chitin-binding, and thereby plays a role in lowering the defense responses of the host to the fungus. Degrades Z.mays Endochitinase A (CHIA) in vitro, although corn is not its host species. The sequence is that of Polyglycine hydrolase from Fusarium vanettenii (strain ATCC MYA-4622 / CBS 123669 / FGSC 9596 / NRRL 45880 / 77-13-4) (Fusarium solani subsp. pisi).